The sequence spans 453 residues: Glutamyl-tRNA reductase (453 aa).

Residues 54 to 57 (TCNR), Ser-113, 118 to 120 (EAQ), and Gln-124 each bind substrate. Catalysis depends on Cys-55, which acts as the Nucleophile. 193–198 (GGGEVS) contributes to the NADP(+) binding site.

The protein belongs to the glutamyl-tRNA reductase family. Homodimer.

The enzyme catalyses (S)-4-amino-5-oxopentanoate + tRNA(Glu) + NADP(+) = L-glutamyl-tRNA(Glu) + NADPH + H(+). It functions in the pathway porphyrin-containing compound metabolism; protoporphyrin-IX biosynthesis; 5-aminolevulinate from L-glutamyl-tRNA(Glu): step 1/2. Its pathway is porphyrin-containing compound metabolism; chlorophyll biosynthesis. In terms of biological role, catalyzes the NADPH-dependent reduction of glutamyl-tRNA(Glu) to glutamate 1-semialdehyde (GSA). This chain is Glutamyl-tRNA reductase, found in Chloroflexus aggregans (strain MD-66 / DSM 9485).